The chain runs to 105 residues: Class I hydrophobin 1 (105 aa).

The signal sequence occupies residues 1–17 (MQFTSFAILAISAVASA). Intrachain disulfides connect Cys-36–Cys-85, Cys-44–Cys-78, Cys-45–Cys-63, and Cys-86–Cys-100. N-linked (GlcNAc...) asparagine glycosylation is found at Asn-48, Asn-67, and Asn-97.

The protein belongs to the fungal hydrophobin family. In terms of assembly, self-assembles to form functional amyloid fibrils called rodlets. Self-assembly into fibrillar rodlets occurs spontaneously at hydrophobic:hydrophilic interfaces and the rodlets further associate laterally to form amphipathic monolayers. As to expression, abundant on conidia and aerial structures formed in vitro and emerging from disease lesions on infected tomato plants.

Its subcellular location is the secreted. The protein localises to the cell wall. In terms of biological role, aerial growth, conidiation, and dispersal of filamentous fungi in the environment rely upon a capability of their secreting small amphipathic proteins called hydrophobins (HPBs) with low sequence identity. Class I can self-assemble into an outermost layer of rodlet bundles on aerial cell surfaces, conferring cellular hydrophobicity that supports fungal growth, development and dispersal; whereas Class II form highly ordered films at water-air interfaces through intermolecular interactions but contribute nothing to the rodlet structure. Hcf-1 is a class I hydrophobin that is not necessary for the development of hyphae or conidia but acts as the main determinant of conidium hydrophobicity and, thus, is required for efficient water-mediated dispersal of conidia. Forms a component of the rodlet layer, but other hydrophobins must also participate in this proces. The sequence is that of Class I hydrophobin 1 from Passalora fulva (Tomato leaf mold).